We begin with the raw amino-acid sequence, 667 residues long: UvrABC system protein B (667 aa).

A Helicase ATP-binding domain is found at 31–414; the sequence is KNFEAGAKAQ…EAEQTDIQVD (384 aa). An ATP-binding site is contributed by 44 to 51; that stretch reads GATGTGKT. The Beta-hairpin motif lies at 97-120; it reads YYDYYQPEAYVPSSDTYIEKDSSI. A Helicase C-terminal domain is found at 435–597; that stretch reads QIDDLVGEIN…ITPKTIIKPI (163 aa). Positions 630 to 665 constitute a UVR domain; sequence LEMVERLSEQMRLAAKKLDFEQAATLRDTILELKSE.

The protein belongs to the UvrB family. Forms a heterotetramer with UvrA during the search for lesions. Interacts with UvrC in an incision complex.

The protein localises to the cytoplasm. The UvrABC repair system catalyzes the recognition and processing of DNA lesions. A damage recognition complex composed of 2 UvrA and 2 UvrB subunits scans DNA for abnormalities. Upon binding of the UvrA(2)B(2) complex to a putative damaged site, the DNA wraps around one UvrB monomer. DNA wrap is dependent on ATP binding by UvrB and probably causes local melting of the DNA helix, facilitating insertion of UvrB beta-hairpin between the DNA strands. Then UvrB probes one DNA strand for the presence of a lesion. If a lesion is found the UvrA subunits dissociate and the UvrB-DNA preincision complex is formed. This complex is subsequently bound by UvrC and the second UvrB is released. If no lesion is found, the DNA wraps around the other UvrB subunit that will check the other stand for damage. This chain is UvrABC system protein B, found in Latilactobacillus sakei subsp. sakei (strain 23K) (Lactobacillus sakei subsp. sakei).